A 561-amino-acid polypeptide reads, in one-letter code: Potassium-transporting ATPase potassium-binding subunit (561 aa).

Transmembrane regions (helical) follow at residues Gly-2–Leu-22, Tyr-65–His-85, Ala-135–Ile-155, Ile-177–Thr-197, Phe-253–Phe-273, Ala-280–Thr-300, Phe-327–Val-347, Ala-353–Gly-373, Gly-378–Gly-398, Ile-413–Ile-433, Leu-482–Leu-502, and Ala-531–Ile-551.

The protein belongs to the KdpA family. In terms of assembly, the system is composed of three essential subunits: KdpA, KdpB and KdpC.

The protein localises to the cell membrane. Its function is as follows. Part of the high-affinity ATP-driven potassium transport (or Kdp) system, which catalyzes the hydrolysis of ATP coupled with the electrogenic transport of potassium into the cytoplasm. This subunit binds the extracellular potassium ions and delivers the ions to the membrane domain of KdpB through an intramembrane tunnel. This chain is Potassium-transporting ATPase potassium-binding subunit, found in Anabaena sp. (strain L31).